The following is a 104-amino-acid chain: L-rhamnose mutarotase (104 aa).

Tyr18 provides a ligand contact to substrate. Catalysis depends on His22, which acts as the Proton donor. Substrate contacts are provided by residues Tyr41 and 76–77; that span reads WW.

This sequence belongs to the rhamnose mutarotase family. As to quaternary structure, homodimer.

It is found in the cytoplasm. It catalyses the reaction alpha-L-rhamnose = beta-L-rhamnose. Its pathway is carbohydrate metabolism; L-rhamnose metabolism. In terms of biological role, involved in the anomeric conversion of L-rhamnose. This Oceanobacillus iheyensis (strain DSM 14371 / CIP 107618 / JCM 11309 / KCTC 3954 / HTE831) protein is L-rhamnose mutarotase.